A 222-amino-acid polypeptide reads, in one-letter code: Cytidylate kinase (222 aa).

Position 11-19 (11-19 (GPAGAGKST)) interacts with ATP.

The protein belongs to the cytidylate kinase family. Type 1 subfamily.

It is found in the cytoplasm. It catalyses the reaction CMP + ATP = CDP + ADP. It carries out the reaction dCMP + ATP = dCDP + ADP. In Desulforamulus reducens (strain ATCC BAA-1160 / DSM 100696 / MI-1) (Desulfotomaculum reducens), this protein is Cytidylate kinase.